Reading from the N-terminus, the 333-residue chain is Biotin synthase (333 aa).

Positions 47-276 (ADIQRASLLS…KARVRLSAGR (230 aa)) constitute a Radical SAM core domain. [4Fe-4S] cluster is bound by residues Cys62, Cys66, and Cys69. The [2Fe-2S] cluster site is built by Cys107, Cys139, Cys199, and Arg271.

Belongs to the radical SAM superfamily. Biotin synthase family. In terms of assembly, homodimer. [4Fe-4S] cluster serves as cofactor. [2Fe-2S] cluster is required as a cofactor.

The enzyme catalyses (4R,5S)-dethiobiotin + (sulfur carrier)-SH + 2 reduced [2Fe-2S]-[ferredoxin] + 2 S-adenosyl-L-methionine = (sulfur carrier)-H + biotin + 2 5'-deoxyadenosine + 2 L-methionine + 2 oxidized [2Fe-2S]-[ferredoxin]. Its pathway is cofactor biosynthesis; biotin biosynthesis; biotin from 7,8-diaminononanoate: step 2/2. Functionally, catalyzes the conversion of dethiobiotin (DTB) to biotin by the insertion of a sulfur atom into dethiobiotin via a radical-based mechanism. In Methylobacterium nodulans (strain LMG 21967 / CNCM I-2342 / ORS 2060), this protein is Biotin synthase.